Reading from the N-terminus, the 743-residue chain is Neutral ceramidase (743 aa).

At Met1 to Ser14 the chain is on the cytoplasmic side. A helical; Signal-anchor for type II membrane protein transmembrane segment spans residues Leu15–Leu35. Topologically, residues Lys36–Phe743 are lumenal. The tract at residues Asp40–Pro60 is disordered. Pro residues predominate over residues Glu49 to Lys59. The Zn(2+) site is built by His151 and His260. The N-linked (GlcNAc...) asparagine glycan is linked to Asn265. Residue Ser312 is the Nucleophile of the active site. Disulfide bonds link Cys320/Cys334 and Cys327/Cys342. N-linked (GlcNAc...) asparagine glycans are attached at residues Asn331, Asn389, Asn398, and Asn451. Cysteines 406 and 456 form a disulfide. Glu498 and Tyr538 together coordinate Zn(2+). Asn661 carries an N-linked (GlcNAc...) asparagine glycan. Ca(2+) is bound by residues Asp672, Ser674, and Thr677. Asn720 carries an N-linked (GlcNAc...) asparagine glycan.

Belongs to the neutral ceramidase family. The cofactor is Zn(2+). N-glycosylated. Post-translationally, O-glycosylated. Detected in intestine (at protein level).

It localises to the cell membrane. The protein resides in the membrane raft. The protein localises to the membrane. It is found in the caveola. Its subcellular location is the golgi apparatus membrane. It localises to the mitochondrion. The protein resides in the secreted. The protein localises to the extracellular exosome. The catalysed reaction is an N-acylsphing-4-enine + H2O = sphing-4-enine + a fatty acid. It catalyses the reaction N-dodecanoylsphing-4-enine + H2O = dodecanoate + sphing-4-enine. The protein operates within lipid metabolism; sphingolipid metabolism. Plasma membrane ceramidase that hydrolyzes sphingolipid ceramides into sphingosine and free fatty acids at neutral pH. Ceramides, sphingosine, and its phosphorylated form sphingosine-1-phosphate are bioactive lipids that mediate cellular signaling pathways regulating several biological processes including cell proliferation, apoptosis and differentiation. Also catalyzes the reverse reaction allowing the synthesis of ceramides from fatty acids and sphingosine. Together with sphingomyelinase, participates in the production of sphingosine and sphingosine-1-phosphate from the degradation of sphingomyelin, a sphingolipid enriched in the plasma membrane of cells. Also participates in the hydrolysis of ceramides from the extracellular milieu allowing the production of sphingosine-1-phosphate inside and outside cells. The sequence is that of Neutral ceramidase (asah2) from Danio rerio (Zebrafish).